Consider the following 99-residue polypeptide: Ubiquitin-related modifier 1 homolog (99 aa).

G99 is modified (1-thioglycine). G99 participates in a covalent cross-link: Glycyl lysine isopeptide (Gly-Lys) (interchain with K-? in acceptor proteins).

Belongs to the URM1 family. As to quaternary structure, interacts with cer. C-terminal thiocarboxylation occurs in 2 steps, it is first acyl-adenylated (-COAMP) via the hesA/moeB/thiF part of the MOCS3 homolog, then thiocarboxylated (-COSH) via the rhodanese domain of the MOCS3 homolog.

It localises to the cytoplasm. It functions in the pathway tRNA modification; 5-methoxycarbonylmethyl-2-thiouridine-tRNA biosynthesis. In terms of biological role, acts as a sulfur carrier required for 2-thiolation of mcm(5)S(2)U at tRNA wobble positions of cytosolic tRNA(Lys), tRNA(Glu) and tRNA(Gln). Serves as sulfur donor in tRNA 2-thiolation reaction by being thiocarboxylated (-COSH) at its C-terminus by MOCS3. The sulfur is then transferred to tRNA to form 2-thiolation of mcm(5)S(2)U. Also acts as a ubiquitin-like protein (UBL) that is covalently conjugated via an isopeptide bond to lysine residues of target proteins such as Prx2/Jafrac1, Ciao1, Eip71CD and GILT1. The thiocarboxylated form serves as substrate for conjugation and oxidative stress specifically induces the formation of UBL-protein conjugates. The chain is Ubiquitin-related modifier 1 homolog from Drosophila persimilis (Fruit fly).